The chain runs to 189 residues: MSENKQPEQNQDLTGEPSPEELEAAQAADEFDAMNAASEAQAQLAVLQAKNTELSDNYLRAKAEAENARRRAEDEISKARKFALESFAESLLPVLDSLEAGLNMKEATLEQLREGSQATLKQLKAALERNKVIEINPVAGSKFDPHQHQAISMVPAAQEANTVVAVLQKGYLIAERVLRPALVTVAAPQ.

The segment covering 1 to 13 (MSENKQPEQNQDL) has biased composition (polar residues). Positions 1–35 (MSENKQPEQNQDLTGEPSPEELEAAQAADEFDAMN) are disordered.

This sequence belongs to the GrpE family. In terms of assembly, homodimer.

The protein resides in the cytoplasm. Functionally, participates actively in the response to hyperosmotic and heat shock by preventing the aggregation of stress-denatured proteins, in association with DnaK and GrpE. It is the nucleotide exchange factor for DnaK and may function as a thermosensor. Unfolded proteins bind initially to DnaJ; upon interaction with the DnaJ-bound protein, DnaK hydrolyzes its bound ATP, resulting in the formation of a stable complex. GrpE releases ADP from DnaK; ATP binding to DnaK triggers the release of the substrate protein, thus completing the reaction cycle. Several rounds of ATP-dependent interactions between DnaJ, DnaK and GrpE are required for fully efficient folding. The polypeptide is Protein GrpE (Polaromonas naphthalenivorans (strain CJ2)).